The primary structure comprises 968 residues: RNA polymerase-associated protein RapA (968 aa).

A Helicase ATP-binding domain is found at 163–332 (EVGRRYAPRV…FARLRLLDPD (170 aa)). Residue 176 to 183 (DEVGLGKT) participates in ATP binding. A DEAH box motif is present at residues 278–281 (DEAH). In terms of domain architecture, Helicase C-terminal spans 491–641 (RVDWLIEFLK…AFELTCPSGH (151 aa)).

The protein belongs to the SNF2/RAD54 helicase family. RapA subfamily. Interacts with the RNAP. Has a higher affinity for the core RNAP than for the holoenzyme. Its ATPase activity is stimulated by binding to RNAP.

Its function is as follows. Transcription regulator that activates transcription by stimulating RNA polymerase (RNAP) recycling in case of stress conditions such as supercoiled DNA or high salt concentrations. Probably acts by releasing the RNAP, when it is trapped or immobilized on tightly supercoiled DNA. Does not activate transcription on linear DNA. Probably not involved in DNA repair. This Shewanella baltica (strain OS185) protein is RNA polymerase-associated protein RapA.